We begin with the raw amino-acid sequence, 333 residues long: Ferrochelatase (333 aa).

The Fe cation site is built by His202 and Glu284.

The protein belongs to the ferrochelatase family.

It localises to the cytoplasm. The catalysed reaction is heme b + 2 H(+) = protoporphyrin IX + Fe(2+). It participates in porphyrin-containing compound metabolism; protoheme biosynthesis; protoheme from protoporphyrin-IX: step 1/1. Catalyzes the ferrous insertion into protoporphyrin IX. The sequence is that of Ferrochelatase from Francisella tularensis subsp. novicida (strain U112).